Here is a 916-residue protein sequence, read N- to C-terminus: MTEDKDAPLREDIRLLGRVLGDTVRDQHGEAAFALIERIRQTSVRFRRDDDNAARLELEGILDALSREQTIEVVRAFSYFSHLSNIAEDQHHIRRSRAHLIAGSAPREGSVAHALVRALASGLPPARLAAFFDTALISPVLTAHPTEVQRKSILNCETDIAHLLDARDRMTLTPEERQESDEALRRTVLTLWQTRMLRPAKLSVVDEVANGLSYFDATFLRELPHLYANLEDQLVSRDPALAGLELPAFLQVGSWIGGDRDGNPFVTADVLERTLAMQAGAVLGFYLDELHALGARLSLALGLVTASDALLALAARSPDHSPHRNDEPYRRAISGIYARLAATHHALLGTEPPRHPVAVAEPYAAVAELADDLDVIHRSLVANGSAALARGQLRRLRRAVRVFGFHLAPIDLRQNSEVHERVVAELLATARTGTDYATLDEAARVELLIEELATPRPLASPHVRYSDETEGELAIFRTARAAHRRYGGPAIPNCIISKTDDVSDLLELALLLKEAGLLRPHERALDVNIVPLFETIEDLANAPSVMDRLFALPGYMNLLAASRDRTHEVMLGYSDSNKDGGFLTSGWALYKAEIGLIEVFARHGIRLRLFHGRGGSVGRGGGPSYEAILAQPGGAVQGQIRLTEQGEVIAAKYGNPEVGRRNLEVIVAATLEASLLADRAPAPRVEFLDTMQALSDVAFAAYRGLVYDTEGFERYFWESTVISEIAELNIGSRPASRKKGTRIEDLRAIPWVFSWSQCRLMLPGWFGFGSAVKTWLAAHADDGIARLQAMHREWSFFAALLSNMDMVLAKTDLAIASRYAGLVKDVNLRDAIFERIRNEWHDTVDALLAITGQRELLDGNPLLKRSIRNRFPYLDPLNHVQVELLRRHRETHDDARIRLGIHISINGIAAGLRNSG.

Active-site residues include histidine 144 and lysine 578.

The protein belongs to the PEPCase type 1 family. Requires Mg(2+) as cofactor.

The catalysed reaction is oxaloacetate + phosphate = phosphoenolpyruvate + hydrogencarbonate. Forms oxaloacetate, a four-carbon dicarboxylic acid source for the tricarboxylic acid cycle. The polypeptide is Phosphoenolpyruvate carboxylase (Aromatoleum aromaticum (strain DSM 19018 / LMG 30748 / EbN1) (Azoarcus sp. (strain EbN1))).